The following is a 374-amino-acid chain: Envelope glycoprotein M (374 aa).

Residues 1–16 are Intravirion-facing; that stretch reads MKSSKKDIFILHIWLK. A helical transmembrane segment spans residues 17–37; that stretch reads LMGCYVFMFITSVVLPIAAMF. At 38–82 the chain is on the virion surface side; it reads PNLGFPCYYNTLVDYSKLNLREKNQAQHLTPTLFLEAPEMFFYVT. A helical membrane pass occupies residues 83 to 103; that stretch reads YSFIVDCCSLVYYALAAVAVV. Topologically, residues 104–117 are intravirion; that stretch reads KAKKHAPGLMALSQ. A helical transmembrane segment spans residues 118-138; the sequence is WIMAVGSPTLLYMAVLKLWTI. Residues 139–149 are Virion surface-facing; that stretch reads QLYIHTLSYKH. A helical transmembrane segment spans residues 150–170; it reads IYLAAFVYCLHWLLSMVYTEC. Over 171–207 the chain is Intravirion; sequence YITNVSSQWTSSELKKTIPENILLYRVVHVLKPIMMN. Residues 208–228 form a helical membrane-spanning segment; sequence VHLSVVALETLIFCLSFMMAI. The Virion surface portion of the chain corresponds to 229-238; sequence GNSFYVMVSD. The chain crosses the membrane as a helical span at residues 239–259; that stretch reads IVFGAINLYLILPIIWYFVTE. Over 260–269 the chain is Intravirion; the sequence is FWLSKYLPRQ. The chain crosses the membrane as a helical span at residues 270–290; it reads FGFYFGVLVASIILILPVVRY. The Virion surface segment spans residues 291–301; it reads DKIFVAAQIHR. A helical membrane pass occupies residues 302-322; the sequence is AVSINIAMIPLCALVALLVRA. The Intravirion portion of the chain corresponds to 323-374; the sequence is CRVYTDRKKIAYTALPSKPQTIKYTKPIEPSTKQAPDSSIFLEEESDTDFEQ. A disordered region spans residues 345 to 374; that stretch reads KYTKPIEPSTKQAPDSSIFLEEESDTDFEQ. The segment covering 364–374 has biased composition (acidic residues); it reads LEEESDTDFEQ.

It belongs to the herpesviridae glycoprotein M family. As to quaternary structure, interacts (via N-terminus) with gN (via N-terminus). The gM-gN heterodimer forms the gCII complex.

It localises to the virion membrane. The protein localises to the host Golgi apparatus. Its subcellular location is the host trans-Golgi network. It is found in the host endosome membrane. The protein resides in the host nucleus inner membrane. Its function is as follows. Envelope glycoprotein important for virion assembly and egress. Plays a role in the correct incorporation of gH-gL into virion membrane. Directs the glycoprotein N (gN) to the host trans-Golgi network. The sequence is that of Envelope glycoprotein M from Connochaetes taurinus (Blue wildebeest).